The following is a 434-amino-acid chain: Tol-Pal system protein TolB (434 aa).

The signal sequence occupies residues 1-21 (MIVRRALALAALALAASPALA). Residues 411–434 (GDRQTPVTSGKTDLAAPAWGPLAP) are disordered.

It belongs to the TolB family. In terms of assembly, the Tol-Pal system is composed of five core proteins: the inner membrane proteins TolA, TolQ and TolR, the periplasmic protein TolB and the outer membrane protein Pal. They form a network linking the inner and outer membranes and the peptidoglycan layer.

The protein resides in the periplasm. Part of the Tol-Pal system, which plays a role in outer membrane invagination during cell division and is important for maintaining outer membrane integrity. In Anaeromyxobacter dehalogenans (strain 2CP-C), this protein is Tol-Pal system protein TolB.